The chain runs to 100 residues: Large ribosomal subunit protein uL23 (100 aa).

The protein belongs to the universal ribosomal protein uL23 family. As to quaternary structure, part of the 50S ribosomal subunit. Contacts protein L29, and trigger factor when it is bound to the ribosome.

Functionally, one of the early assembly proteins it binds 23S rRNA. One of the proteins that surrounds the polypeptide exit tunnel on the outside of the ribosome. Forms the main docking site for trigger factor binding to the ribosome. This is Large ribosomal subunit protein uL23 from Synechococcus sp. (strain CC9311).